A 628-amino-acid chain; its full sequence is Netrin-4 (628 aa).

Positions 1–19 are cleaved as a signal peptide; sequence MGSCARLLLLWGCSAVAAG. Positions 30–261 constitute a Laminin N-terminal domain; it reads CEKACNPRMG…AVYDFIVKGS (232 aa). Asparagine 56 and asparagine 163 each carry an N-linked (GlcNAc...) asparagine glycan. 12 disulfide bridges follow: cysteine 262–cysteine 271, cysteine 264–cysteine 293, cysteine 295–cysteine 304, cysteine 307–cysteine 329, cysteine 332–cysteine 341, cysteine 334–cysteine 359, cysteine 362–cysteine 371, cysteine 374–cysteine 392, cysteine 395–cysteine 413, cysteine 397–cysteine 420, cysteine 422–cysteine 431, and cysteine 434–cysteine 446. 3 consecutive Laminin EGF-like domains span residues 262-331, 332-394, and 395-448; these read CFCN…ECRT, CKCN…ACKA, and CSCH…GCRP. Residue asparagine 353 is glycosylated (N-linked (GlcNAc...) asparagine). Asparagine 483 carries N-linked (GlcNAc...) asparagine glycosylation. Intrachain disulfides connect cysteine 506–cysteine 576 and cysteine 520–cysteine 627. Residues 506-627 form the NTR domain; sequence CECKEQVLGN…RVMHILKRDC (122 aa).

In terms of assembly, may form a homodimer. In terms of tissue distribution, expressed in kidney, liver, heart, ovary, testis, retina, brain, olfactory bulb, and widely expressed in embryo.

The protein resides in the secreted. It is found in the extracellular space. The protein localises to the extracellular matrix. It localises to the basement membrane. Functionally, may play an important role in neural, kidney and vascular development. Promotes neurite elongation from olfactory bulb explants. This is Netrin-4 (Ntn4) from Mus musculus (Mouse).